Consider the following 595-residue polypeptide: MFASCHCAPRGRRTMKMIHFRSSSIKSLNQEMKCTIRLLDDSEVSCHIQRETKGQFLIEYICNYYSLLEKDYFGIRYVDPEKQRHWLEPNKSIFKQMKSHPPYTMCFRVKFYPHEPLKIKEELTRYLLYLQIKRDIFHGRLLCSFSDAAYLGACIVQAEFGDYYPDEHPENYISEFEIFPKQSQKLERKIMEIHNNELRGQSPAIAEFNLLLKAHTLETYGVDPHPCKDSRGATAFLGFTAAGFVVFQGNKRIHLRKWSDVCKLKFEGKTFYVIGSQKEKNAVLAFHTSTPAACKHLWKCGVENQAFYKYAKSSQIKTVSSSKIFFKGSRFRYSGKVAKEVVEASSKIQRDPPEVHRVNITQSRSFHSLNKQLIINMEPLQPLLPSPTEQEEEVPVGEGVPLPKMDVSEPLIASSPVKGAQCADPPDEEEDRVKEDPLTISELAYNPSASLLPTPVDDDEINMLFDCPSRLELEREDTDSFEELEADENAFLIAEEEELKEARQALSWSYSILTGHIWVNPLVKSFSRLLVVGLGLLLFVFPLLLLLLESGIDLSFLCEIRQTPEFEQFHYEYYCPLKEWVAGKVNIVLYMLGCS.

The region spanning 32-312 (MKCTIRLLDD…ENQAFYKYAK (281 aa)) is the FERM domain. The helical transmembrane segment at 529–549 (LLVVGLGLLLFVFPLLLLLLE) threads the bilayer.

The protein resides in the membrane. Its function is as follows. Putative tumor suppressor gene that may be implicated in the origin and progression of lung cancer. This is FERM domain-containing protein 3 (Frmd3) from Mus musculus (Mouse).